Reading from the N-terminus, the 150-residue chain is Probable antibacterial peptide (150 aa).

The N-terminal stretch at 1–19 (MHIARFCLLSSMAVLALSA) is a signal peptide.

The protein localises to the secreted. Functionally, has antibacterial activity in vitro. The sequence is that of Probable antibacterial peptide from Riptortus clavatus (Bean bug).